The following is a 174-amino-acid chain: Isomerase prhC (174 aa).

Belongs to the trt14 isomerase family. As to quaternary structure, homodimer.

It functions in the pathway secondary metabolite biosynthesis; terpenoid biosynthesis. In terms of biological role, isomerase; part of the gene cluster that mediates the biosynthesis of paraherquonin, a meroterpenoid with a unique, highly congested hexacyclic molecular architecture. The first step of the pathway is the synthesis of 3,5-dimethylorsellinic acid (DMOA) by the polyketide synthase prhL. Synthesis of DMOA is followed by farnesylation by the prenyltransferase prhE, methylesterification by the methyl-transferase prhM, epoxidation of the prenyl chain by the flavin-dependent monooxygenase prhF, and cyclization of the farnesyl moiety by the terpene cyclase prhH, to yield the tetracyclic intermediate, protoaustinoid A. The short chain dehydrogenase prhI then oxidizes the C-3 alcohol group of the terpene cyclase product to transform protoaustinoid A into protoaustinoid B. The FAD-binding monooxygenase prhJ catalyzes the oxidation of protoaustinoid B into preaustinoid A which is further oxidized into preaustinoid A1 by FAD-binding monooxygenase phrK. Finally, prhA leads to berkeleydione via the berkeleyone B intermediate. PrhA is a multifunctional dioxygenase that first desaturates at C5-C6 to form berkeleyone B, followed by rearrangement of the A/B-ring to form the cycloheptadiene moiety in berkeleydione. Berkeleydione serves as the key intermediate for the biosynthesis of paraherquonin as well as many other meroterpenoids. The cytochrome P450 monooxygenases prhB, prhD, and prhN, as well as the isomerase prhC, are probably involved in the late stage of paraherquonin biosynthesis, after the production of berkeleydione. Especially prhC might be a multifunctional enzyme that catalyzes the D-ring expansion via intramolecular methoxy rearrangement, as well as the hydrolysis of the expanded D-ring. The polypeptide is Isomerase prhC (Penicillium brasilianum).